Reading from the N-terminus, the 81-residue chain is ATP synthase subunit c, chloroplastic (81 aa).

A run of 2 helical transmembrane segments spans residues 7 to 27 (AASVIAAGLAVGLASIGPGVG) and 57 to 77 (LAFMEALTIYGLVVALALLFA).

This sequence belongs to the ATPase C chain family. As to quaternary structure, F-type ATPases have 2 components, F(1) - the catalytic core - and F(0) - the membrane proton channel. F(1) has five subunits: alpha(3), beta(3), gamma(1), delta(1), epsilon(1). F(0) has four main subunits: a(1), b(1), b'(1) and c(10-14). The alpha and beta chains form an alternating ring which encloses part of the gamma chain. F(1) is attached to F(0) by a central stalk formed by the gamma and epsilon chains, while a peripheral stalk is formed by the delta, b and b' chains.

The protein resides in the plastid. It is found in the chloroplast thylakoid membrane. Its function is as follows. F(1)F(0) ATP synthase produces ATP from ADP in the presence of a proton or sodium gradient. F-type ATPases consist of two structural domains, F(1) containing the extramembraneous catalytic core and F(0) containing the membrane proton channel, linked together by a central stalk and a peripheral stalk. During catalysis, ATP synthesis in the catalytic domain of F(1) is coupled via a rotary mechanism of the central stalk subunits to proton translocation. Key component of the F(0) channel; it plays a direct role in translocation across the membrane. A homomeric c-ring of between 10-14 subunits forms the central stalk rotor element with the F(1) delta and epsilon subunits. In Arabis hirsuta (Hairy rock-cress), this protein is ATP synthase subunit c, chloroplastic.